Consider the following 236-residue polypeptide: tRNA1(Val) (adenine(37)-N6)-methyltransferase (236 aa).

The protein belongs to the methyltransferase superfamily. tRNA (adenine-N(6)-)-methyltransferase family.

Its subcellular location is the cytoplasm. The catalysed reaction is adenosine(37) in tRNA1(Val) + S-adenosyl-L-methionine = N(6)-methyladenosine(37) in tRNA1(Val) + S-adenosyl-L-homocysteine + H(+). Functionally, specifically methylates the adenine in position 37 of tRNA(1)(Val) (anticodon cmo5UAC). The chain is tRNA1(Val) (adenine(37)-N6)-methyltransferase from Histophilus somni (strain 129Pt) (Haemophilus somnus).